The primary structure comprises 689 residues: 7SK snRNA methylphosphate capping enzyme (689 aa).

Position 1 is an N-acetylmethionine (Met-1). Residues 1–10 (MIEMAAEKEP) are compositionally biased toward basic and acidic residues. The segment at 1-167 (MIEMAAEKEP…GGGGFKHPAF (167 aa)) is disordered. The span at 52–84 (GRCAPSAGSPAAAVGRESPGAAATSSSGPQAQQ) shows a compositional bias: low complexity. Residues Ser-57, Ser-60, Ser-69, and Ser-101 each carry the phosphoserine modification. Arg-117 carries the post-translational modification Omega-N-methylarginine. Residues Ser-152, Ser-175, and Ser-179 each carry the phosphoserine modification. Position 213 is a phosphothreonine (Thr-213). Ser-216, Ser-217, and Ser-254 each carry phosphoserine. A compositionally biased stretch (basic residues) spans 258–269 (TGRKRHRHRGQH). A disordered region spans residues 258 to 314 (TGRKRHRHRGQHHQQQQAAGGSESHPVPPTAPLTPLLHGEGASQQPRHRGQNRDAPQ). Phosphothreonine is present on Thr-291. Residues Ser-330 and Ser-344 each carry the phosphoserine modification. Positions 332–407 (LPSALQGPSG…HHPLPAAGFK (76 aa)) are disordered. A compositionally biased stretch (low complexity) spans 338-359 (GPSGSLSAPPAASVISAPPSSS). Residues 360–369 (SRHRKRRRTS) are compositionally biased toward basic residues. Ser-390 bears the Phosphoserine mark. S-adenosyl-L-methionine contacts are provided by residues Tyr-422, Arg-433, 451–453 (GCN), 474–475 (DI), 559–560 (NY), and Leu-581. A Bin3-type SAM domain is found at 431–686 (DGRLRVLKPE…PVYLFHKARS (256 aa)). Lys-643 is covalently cross-linked (Glycyl lysine isopeptide (Lys-Gly) (interchain with G-Cter in SUMO2)).

Belongs to the methyltransferase superfamily. As to quaternary structure, core component of the 7SK RNP complex, at least composed of 7SK RNA, LARP7, MEPCE, HEXIM1 (or HEXIM2) and P-TEFb (composed of CDK9 and CCNT1/cyclin-T1). Interacts with METTL16. Interacts with RBM7; upon genotoxic stress this interaction is enhanced, triggering the release of inactive P-TEFb complex from the core, yielding to P-TEFb complex activation. Post-translationally, dephosphorylated at Ser-152 by the PNUTS-PP1 complex, promoting RNA polymerase II transcription pause-release. In terms of tissue distribution, expressed in chronic myeloid leukemia cells, adrenal gland, brain, cerebellum, kidney, lung, mammary gland and testis. Weakly or not expressed in other tissues.

The protein resides in the nucleus. It catalyses the reaction a 5'-end triphospho-guanosine-ribonucleotide-snRNA + S-adenosyl-L-methionine = a 5'-end methyltriphosphate-guanosine-ribonucleotide-snRNA + S-adenosyl-L-homocysteine. In terms of biological role, S-adenosyl-L-methionine-dependent methyltransferase that adds a methylphosphate cap at the 5'-end of 7SK snRNA (7SK RNA), leading to stabilize it. Also has a non-enzymatic function as part of the 7SK RNP complex: the 7SK RNP complex sequesters the positive transcription elongation factor b (P-TEFb) in a large inactive 7SK RNP complex preventing RNA polymerase II phosphorylation and subsequent transcriptional elongation. The 7SK RNP complex also promotes snRNA gene transcription by RNA polymerase II via interaction with the little elongation complex (LEC). In the 7SK RNP complex, MEPCE is required to stabilize 7SK RNA and facilitate the assembly of 7SK RNP complex. MEPCE has a non-enzymatic function in the 7SK RNP complex; interaction with LARP7 within the 7SK RNP complex occluding its catalytic center. Also required for stability of U6 snRNAs. The protein is 7SK snRNA methylphosphate capping enzyme of Homo sapiens (Human).